Here is a 61-residue protein sequence, read N- to C-terminus: Large ribosomal subunit protein bL32 (61 aa).

This sequence belongs to the bacterial ribosomal protein bL32 family.

This Ehrlichia chaffeensis (strain ATCC CRL-10679 / Arkansas) protein is Large ribosomal subunit protein bL32.